Consider the following 176-residue polypeptide: MLIPPINLHAWIEEHRHLLKPPVGNKCIQQDGFIIMIVGGPNARTDYHYDEGPEWFFQLEGEMVLKVQDDGVARDIPIRAGEIFLLPPRVPHSPQRAAGSIGIVIERVRLPHEQDGLQWYCPQCNHKLYEAMFPLKNIETDFPPVFDHFYRSLALRTCSQCGHLHPAPERYAAVED.

Position 44 (Arg44) interacts with O2. Positions 48, 54, and 92 each coordinate Fe cation. Glu54 is a binding site for substrate. 2 residues coordinate substrate: Arg96 and Glu106. Fe cation-binding residues include Cys121, Cys124, Cys158, and Cys161.

The protein belongs to the 3-HAO family. Homodimer. It depends on Fe(2+) as a cofactor.

The catalysed reaction is 3-hydroxyanthranilate + O2 = (2Z,4Z)-2-amino-3-carboxymuconate 6-semialdehyde. It functions in the pathway cofactor biosynthesis; NAD(+) biosynthesis; quinolinate from L-kynurenine: step 3/3. In terms of biological role, catalyzes the oxidative ring opening of 3-hydroxyanthranilate to 2-amino-3-carboxymuconate semialdehyde, which spontaneously cyclizes to quinolinate. The sequence is that of 3-hydroxyanthranilate 3,4-dioxygenase from Xanthomonas oryzae pv. oryzae (strain MAFF 311018).